Consider the following 323-residue polypeptide: tRNA(Ile)-lysidine synthase (323 aa).

33 to 38 (SGGPDS) serves as a coordination point for ATP.

The protein belongs to the tRNA(Ile)-lysidine synthase family.

It localises to the cytoplasm. It carries out the reaction cytidine(34) in tRNA(Ile2) + L-lysine + ATP = lysidine(34) in tRNA(Ile2) + AMP + diphosphate + H(+). Its function is as follows. Ligates lysine onto the cytidine present at position 34 of the AUA codon-specific tRNA(Ile) that contains the anticodon CAU, in an ATP-dependent manner. Cytidine is converted to lysidine, thus changing the amino acid specificity of the tRNA from methionine to isoleucine. The protein is tRNA(Ile)-lysidine synthase of Mycobacterium bovis (strain ATCC BAA-935 / AF2122/97).